The primary structure comprises 162 residues: Probable chemoreceptor glutamine deamidase CheD 3 (162 aa).

This sequence belongs to the CheD family.

The enzyme catalyses L-glutaminyl-[protein] + H2O = L-glutamyl-[protein] + NH4(+). In terms of biological role, probably deamidates glutamine residues to glutamate on methyl-accepting chemotaxis receptors (MCPs), playing an important role in chemotaxis. This chain is Probable chemoreceptor glutamine deamidase CheD 3, found in Geobacter sulfurreducens (strain ATCC 51573 / DSM 12127 / PCA).